Reading from the N-terminus, the 493-residue chain is Ribulose bisphosphate carboxylase large chain (493 aa).

Asn-132 provides a ligand contact to substrate. Cys-181 is subject to S-nitrosocysteine. Thr-182 lines the substrate pocket. Lys-184 acts as the Proton acceptor in catalysis. Residue Lys-186 participates in substrate binding. The Mg(2+) site is built by Lys-210, Asp-212, and Glu-213. An N6-carboxylysine modification is found at Lys-210. The active-site Proton acceptor is His-302. Substrate is bound by residues Arg-303, His-335, and Ser-387. Cys-460 bears the S-nitrosocysteine mark.

This sequence belongs to the RuBisCO large chain family. Type I subfamily. As to quaternary structure, heterohexadecamer of 8 large chains and 8 small chains. The cofactor is Mg(2+).

It localises to the plastid. It is found in the chloroplast. It catalyses the reaction 2 (2R)-3-phosphoglycerate + 2 H(+) = D-ribulose 1,5-bisphosphate + CO2 + H2O. The enzyme catalyses D-ribulose 1,5-bisphosphate + O2 = 2-phosphoglycolate + (2R)-3-phosphoglycerate + 2 H(+). In terms of biological role, ruBisCO catalyzes two reactions: the carboxylation of D-ribulose 1,5-bisphosphate, the primary event in carbon dioxide fixation, as well as the oxidative fragmentation of the pentose substrate in the photorespiration process. Both reactions occur simultaneously and in competition at the same active site. Carbon dioxide and oxygen bind in the same pocket of the enzyme in a similar manner. In Galdieria sulphuraria (Red alga), this protein is Ribulose bisphosphate carboxylase large chain.